We begin with the raw amino-acid sequence, 119 residues long: UPF0102 protein Sare_1228 (119 aa).

It belongs to the UPF0102 family.

In Salinispora arenicola (strain CNS-205), this protein is UPF0102 protein Sare_1228.